The chain runs to 350 residues: Farnesyl pyrophosphate synthase (350 aa).

Residues Lys-55, Arg-58, and Gln-94 each contribute to the isopentenyl diphosphate site. 2 residues coordinate Mg(2+): Asp-101 and Asp-105. Arg-110 is a binding site for dimethylallyl diphosphate. Residue Arg-111 participates in isopentenyl diphosphate binding. Residues Lys-198, Thr-199, Gln-237, Lys-254, and Lys-263 each coordinate dimethylallyl diphosphate.

This sequence belongs to the FPP/GGPP synthase family. Mg(2+) serves as cofactor.

It localises to the cytoplasm. It catalyses the reaction isopentenyl diphosphate + dimethylallyl diphosphate = (2E)-geranyl diphosphate + diphosphate. The enzyme catalyses isopentenyl diphosphate + (2E)-geranyl diphosphate = (2E,6E)-farnesyl diphosphate + diphosphate. It functions in the pathway isoprenoid biosynthesis; farnesyl diphosphate biosynthesis; farnesyl diphosphate from geranyl diphosphate and isopentenyl diphosphate: step 1/1. The protein operates within isoprenoid biosynthesis; geranyl diphosphate biosynthesis; geranyl diphosphate from dimethylallyl diphosphate and isopentenyl diphosphate: step 1/1. Functionally, catalyzes the sequential condensation of isopentenyl pyrophosphate with the allylic pyrophosphates, dimethylallyl pyrophosphate, and then with the resultant geranylpyrophosphate to the ultimate product farnesyl pyrophosphate. This is Farnesyl pyrophosphate synthase (FPS) from Zea mays (Maize).